The chain runs to 161 residues: MPSFDIVSEVDEVELRNAVENSRRELSSRFDFRGKDASIEYKDHVVTLTAEDDFQCKQLVDILRTQLSKRNVEPSTMDVDEKSVHSGKTFSLKVRFKQGIETDIAKKIVKMVKDSKIKVQSQIQGDTVRVTGKARDDLQAVMALVRQADLGQPFQFNNFRD.

This sequence belongs to the YajQ family.

Nucleotide-binding protein. The polypeptide is Nucleotide-binding protein Shewmr4_3156 (Shewanella sp. (strain MR-4)).